The following is a 257-amino-acid chain: Imidazole glycerol phosphate synthase subunit HisF (257 aa).

Residues aspartate 11 and aspartate 130 contribute to the active site.

The protein belongs to the HisA/HisF family. As to quaternary structure, heterodimer of HisH and HisF.

It localises to the cytoplasm. The catalysed reaction is 5-[(5-phospho-1-deoxy-D-ribulos-1-ylimino)methylamino]-1-(5-phospho-beta-D-ribosyl)imidazole-4-carboxamide + L-glutamine = D-erythro-1-(imidazol-4-yl)glycerol 3-phosphate + 5-amino-1-(5-phospho-beta-D-ribosyl)imidazole-4-carboxamide + L-glutamate + H(+). It participates in amino-acid biosynthesis; L-histidine biosynthesis; L-histidine from 5-phospho-alpha-D-ribose 1-diphosphate: step 5/9. Functionally, IGPS catalyzes the conversion of PRFAR and glutamine to IGP, AICAR and glutamate. The HisF subunit catalyzes the cyclization activity that produces IGP and AICAR from PRFAR using the ammonia provided by the HisH subunit. The sequence is that of Imidazole glycerol phosphate synthase subunit HisF from Vibrio parahaemolyticus serotype O3:K6 (strain RIMD 2210633).